The primary structure comprises 77 residues: Large ribosomal subunit protein bL28 (77 aa).

This sequence belongs to the bacterial ribosomal protein bL28 family.

The sequence is that of Large ribosomal subunit protein bL28 from Laribacter hongkongensis (strain HLHK9).